A 203-amino-acid polypeptide reads, in one-letter code: MKKIAITCALLSSLVASSVWADAASDLKSRLDKVSSFHASFTQKVTDGSGAAVQEGQGDLWVKRPNLFNWHMTQPDESILVSDGKTLWFYNPFVEQATATWLKDATGNTPFMLIARNQSSDWQQYNIKQNGDDFVLTPKASNGNLKQFTINVGRDGTIHQFSAVEQDDQRSSYQLKSQQNGAVDAAKFTFTPPQGVTVDDQRK.

An N-terminal signal peptide occupies residues 1–21 (MKKIAITCALLSSLVASSVWA).

This sequence belongs to the LolA family. Monomer.

The protein resides in the periplasm. Participates in the translocation of lipoproteins from the inner membrane to the outer membrane. Only forms a complex with a lipoprotein if the residue after the N-terminal Cys is not an aspartate (The Asp acts as a targeting signal to indicate that the lipoprotein should stay in the inner membrane). The protein is Outer-membrane lipoprotein carrier protein of Escherichia coli O139:H28 (strain E24377A / ETEC).